The sequence spans 291 residues: ATP synthase gamma chain (291 aa).

This sequence belongs to the ATPase gamma chain family. F-type ATPases have 2 components, CF(1) - the catalytic core - and CF(0) - the membrane proton channel. CF(1) has five subunits: alpha(3), beta(3), gamma(1), delta(1), epsilon(1). CF(0) has three main subunits: a, b and c.

The protein localises to the cell inner membrane. Functionally, produces ATP from ADP in the presence of a proton gradient across the membrane. The gamma chain is believed to be important in regulating ATPase activity and the flow of protons through the CF(0) complex. The protein is ATP synthase gamma chain of Burkholderia mallei (strain NCTC 10247).